Here is a 428-residue protein sequence, read N- to C-terminus: UPF0229 protein YeaH (428 aa).

Residues 78–90 are compositionally biased toward basic and acidic residues; the sequence is GNDHFIQNDRIER. Positions 78–111 are disordered; that stretch reads GNDHFIQNDRIERPQGGGGGGSGSGQGQASQDGE. Residues 92 to 103 show a composition bias toward gly residues; sequence QGGGGGGSGSGQ.

The protein belongs to the UPF0229 family.

The sequence is that of UPF0229 protein YeaH from Salmonella enteritidis PT4 (strain P125109).